The primary structure comprises 844 residues: DNA mismatch repair protein MutS (844 aa).

602-609 is an ATP binding site; that stretch reads GPNMSGKS.

Belongs to the DNA mismatch repair MutS family.

In terms of biological role, this protein is involved in the repair of mismatches in DNA. It is possible that it carries out the mismatch recognition step. This protein has a weak ATPase activity. This chain is DNA mismatch repair protein MutS, found in Streptococcus pneumoniae (strain ATCC 700669 / Spain 23F-1).